We begin with the raw amino-acid sequence, 117 residues long: uncharacterized protein (117 aa).

2 consecutive transmembrane segments (helical) span residues I9–F29 and V56–P76.

Its subcellular location is the membrane. This is an uncharacterized protein from Saccharomyces cerevisiae (strain ATCC 204508 / S288c) (Baker's yeast).